Here is a 206-residue protein sequence, read N- to C-terminus: Ribosomal RNA large subunit methyltransferase E (206 aa).

Positions 60, 62, 80, 96, and 121 each coordinate S-adenosyl-L-methionine. Catalysis depends on lysine 161, which acts as the Proton acceptor.

This sequence belongs to the class I-like SAM-binding methyltransferase superfamily. RNA methyltransferase RlmE family.

It is found in the cytoplasm. The catalysed reaction is uridine(2552) in 23S rRNA + S-adenosyl-L-methionine = 2'-O-methyluridine(2552) in 23S rRNA + S-adenosyl-L-homocysteine + H(+). Specifically methylates the uridine in position 2552 of 23S rRNA at the 2'-O position of the ribose in the fully assembled 50S ribosomal subunit. This chain is Ribosomal RNA large subunit methyltransferase E, found in Francisella tularensis subsp. holarctica (strain FTNF002-00 / FTA).